Consider the following 92-residue polypeptide: N(2)-fixation sustaining protein CowN (92 aa).

Belongs to the CowN family.

In terms of biological role, is required to sustain N(2)-dependent growth in the presence of low levels of carbon monoxide (CO). Probably acts by protecting the N(2) fixation ability of the nitrogenase complex, which is inactivated in the presence of CO. This Rhodobacter capsulatus (strain ATCC BAA-309 / NBRC 16581 / SB1003) protein is N(2)-fixation sustaining protein CowN.